The chain runs to 1186 residues: ATP-dependent helicase/nuclease subunit A (1186 aa).

The UvrD-like helicase ATP-binding domain maps to 2–460 (NFSKNQRAVI…IELSENYRSQ (459 aa)). Residue 23-30 (ASAGSGKT) participates in ATP binding. The 285-residue stretch at 487–771 (DVELKAANRD…SVMTIHAAKG (285 aa)) folds into the UvrD-like helicase C-terminal domain.

This sequence belongs to the helicase family. AddA subfamily. As to quaternary structure, heterodimer of AddA and AddB/RexB. It depends on Mg(2+) as a cofactor.

It catalyses the reaction Couples ATP hydrolysis with the unwinding of duplex DNA by translocating in the 3'-5' direction.. It carries out the reaction ATP + H2O = ADP + phosphate + H(+). The heterodimer acts as both an ATP-dependent DNA helicase and an ATP-dependent, dual-direction single-stranded exonuclease. Recognizes the chi site generating a DNA molecule suitable for the initiation of homologous recombination. The AddA nuclease domain is required for chi fragment generation; this subunit has the helicase and 3' -&gt; 5' nuclease activities. The sequence is that of ATP-dependent helicase/nuclease subunit A from Oenococcus oeni (strain ATCC BAA-331 / PSU-1).